Consider the following 394-residue polypeptide: 4-hydroxyphenylpyruvate dioxygenase (394 aa).

2 consecutive VOC domains span residues glycine 27–arginine 161 and histidine 193–lysine 351. Residues histidine 196, histidine 279, and glutamate 362 each coordinate Fe cation.

Belongs to the 4HPPD family. Fe cation is required as a cofactor.

The catalysed reaction is 3-(4-hydroxyphenyl)pyruvate + O2 = homogentisate + CO2. The protein operates within amino-acid degradation; L-phenylalanine degradation; acetoacetate and fumarate from L-phenylalanine: step 3/6. In Yarrowia lipolytica (strain CLIB 122 / E 150) (Yeast), this protein is 4-hydroxyphenylpyruvate dioxygenase.